Consider the following 898-residue polypeptide: Protein kintoun (898 aa).

2 disordered regions span residues 558-680 (GELK…VESD) and 765-822 (ILGQ…SGIS). Residues 575-602 (INTRTVEDDTKVAKENVKKVDQETAHEG) show a composition bias toward basic and acidic residues. The segment covering 603 to 616 (KKSKKNQRRKNKKR) has biased composition (basic residues). Residues 641–656 (NEANSFEGTGSSSEAT) are compositionally biased toward polar residues.

It belongs to the PIH1 family. Kintoun subfamily.

The protein localises to the cytoplasm. Its function is as follows. Required for cytoplasmic pre-assembly of axonemal dyneins, thereby playing a central role in motility in cilia and flagella. Involved in pre-assembly of dynein arm complexes in the cytoplasm before intraflagellar transport loads them for the ciliary compartment. This chain is Protein kintoun, found in Aedes aegypti (Yellowfever mosquito).